The sequence spans 440 residues: Alpha-ionylideneethane synthase aba3 (440 aa).

The protein belongs to the alpha-ionylideneethane synthase family.

It functions in the pathway hormone biosynthesis. Alpha-ionylideneethane synthase; part of the gene cluster that mediates the biosynthesis of abscisic acid (ABA), a phytohormone that acts antagonistically toward salicylic acid (SA), jasmonic acid (JA) and ethylene (ETH) signaling, to impede plant defense responses. The first step of the pathway catalyzes the reaction from farnesyl diphosphate to alpha-ionylideneethane performed by the alpha-ionylideneethane synthase aba3 via a three-step reaction mechanism involving 2 neutral intermediates, beta-farnesene and allofarnesene. The cytochrome P450 monooxygenase aba1 might then be involved in the conversion of alpha-ionylideneethane to alpha-ionylideneacetic acid. Alpha-ionylideneacetic acid is further converted to abscisic acid in 2 steps involving the cytochrome P450 monooxygenase aba2 and the short-chain dehydrogenase/reductase aba4, via the intermediates 1'-deoxy-ABA or 1',4'-trans-diol-ABA, depending on the order of action of these 2 enzymes. Aba2 is responsible for the hydroxylation of carbon atom C-1' and aba4 might be involved in the oxidation of the C-4' carbon atom. The protein is Alpha-ionylideneethane synthase aba3 of Botryotinia fuckeliana (strain B05.10) (Noble rot fungus).